We begin with the raw amino-acid sequence, 2221 residues long: Voltage-dependent L-type calcium channel subunit alpha-1C (2221 aa).

The tract at residues 1–20 (MVNENTRMYIPEENHQGSNY) is disordered. At 1-124 (MVNENTRMYI…RACISIVEWK (124 aa)) the chain is on the cytoplasmic side. The tract at residues 47-68 (GAALSWQAAIDAARQAKLMGSA) is calmodulin-binding. The interval 73–98 (ISTVSSTQRKRQQYGKPKKQGSTTAT) is disordered. Residues 80 to 91 (QRKRQQYGKPKK) are compositionally biased toward basic residues. One copy of the I repeat lies at 111-408 (NPIRRACISI…LVLGVLSGEF (298 aa)). The helical transmembrane segment at 125-143 (PFEIIILLTIFANCVALAI) threads the bilayer. Residues 144–158 (YIPFPEDDSNATNSN) lie on the Extracellular side of the membrane. N-linked (GlcNAc...) asparagine glycosylation occurs at Asn-153. Residues 159–179 (LERVEYLFLIIFTVEAFLKVI) form a helical membrane-spanning segment. The Cytoplasmic segment spans residues 180–188 (AYGLLFHPN). Residues 189–209 (AYLRNGWNLLDFIIVVVGLFS) form a helical membrane-spanning segment. Residues 210–232 (AILEQATKADGANALGGKGAGFD) lie on the Extracellular side of the membrane. Residues 233 to 251 (VKALRAFRVLRPLRLVSGV) traverse the membrane as a helical segment. The Cytoplasmic portion of the chain corresponds to 252–268 (PSLQVVLNSIIKAMVPL). Residues 269-290 (LHIALLVLFVIIIYAIIGLELF) traverse the membrane as a helical segment. Topologically, residues 291–350 (MGKMHKTCYNQEGIADVPAEDDPSPCALETGHGRQCQNGTVCKPGWDGPKHGITNFDNFA) are extracellular. 2 disulfides stabilise this stretch: Cys-298–Cys-326 and Cys-316–Cys-332. Asn-328 carries an N-linked (GlcNAc...) asparagine glycan. Positions 351 to 372 (FAMLTVFQCITMEGWTDVLYWV) form an intramembrane region, pore-forming. The Selectivity filter of repeat I signature appears at 361-364 (TMEG). Ca(2+) is bound at residue Glu-363. Residues 373–380 (NDAVGRDW) lie on the Extracellular side of the membrane. Residues 381–401 (PWIYFVTLIIIGSFFVLNLVL) form a helical membrane-spanning segment. Over 402 to 524 (GVLSGEFSKE…RKCRAAVKSN (123 aa)) the chain is Cytoplasmic. Residues 428 to 445 (QQLEEDLKGYLDWITQAE) are AID/alpha-interaction domain; mediates interaction with the beta subunit. Positions 449 to 481 (PENEDEGMDEEKPRNMSMPTSETESVNTENVAG) are disordered. The span at 465–478 (SMPTSETESVNTEN) shows a compositional bias: polar residues. Position 469 is a phosphoserine (Ser-469). Thr-476 carries the phosphothreonine modification. Residues 510-756 (NRFCRRKCRA…VFLAIAVDNL (247 aa)) form an II repeat. Residues 525 to 543 (VFYWLVIFLVFLNTLTIAS) traverse the membrane as a helical segment. Residues 544-554 (EHYNQPNWLTE) lie on the Extracellular side of the membrane. The helical transmembrane segment at 555-575 (VQDTANKALLALFTAEMLLKM) threads the bilayer. Over 576-586 (YSLGLQAYFVS) the chain is Cytoplasmic. A helical membrane pass occupies residues 587–606 (LFNRFDCFVVCGGILETILV). At 607–615 (ETKIMSPLG) the chain is on the extracellular side. Residues 616 to 634 (ISVLRCVRLLRIFKITRYW) form a helical membrane-spanning segment. The Cytoplasmic portion of the chain corresponds to 635–653 (NSLSNLVASLLNSVRSIAS). The chain crosses the membrane as a helical span at residues 654–673 (LLLLLFLFIIIFSLLGMQLF). The Extracellular portion of the chain corresponds to 674-693 (GGKFNFDEMQTRRSTFDNFP). An intramembrane region (pore-forming) is located at residues 694-715 (QSLLTVFQILTGEDWNSVMYDG). A Selectivity filter of repeat II motif is present at residues 704-707 (TGED). A Ca(2+)-binding site is contributed by Glu-706. The Extracellular portion of the chain corresponds to 716 to 725 (IMAYGGPSFP). The helical transmembrane segment at 726-745 (GMLVCIYFIILFICGNYILL) threads the bilayer. The Cytoplasmic segment spans residues 746 to 900 (NVFLAIAVDN…LQCHRIVNDT (155 aa)). The interval 764-861 (SAQKEEEEEK…EMPVGPRPRP (98 aa)) is disordered. Positions 783-792 (SPEKKQELVE) are enriched in basic and acidic residues. A phosphoserine mark is found at Ser-808 and Ser-815. The segment at 829-876 (NENEDKSPYPNPETTGEEDEEEPEMPVGPRPRPLSELHLKEKAVPMPE) is interaction with STAC2. Acidic residues predominate over residues 843-852 (TGEEDEEEPE). An III repeat occupies 887-1189 (NRFRLQCHRI…IFVGFVIVTF (303 aa)). The chain crosses the membrane as a helical span at residues 901–919 (IFTNLILFFILLSSISLAA). At 920 to 931 (EDPVQHTSFRNH) the chain is on the extracellular side. A helical transmembrane segment spans residues 932-952 (ILFYFDIVFTTIFTIEIALKI). The Cytoplasmic segment spans residues 953–987 (LGNADYVFTSIFTLEIILKMTAYGAFLHKGSFCRN). Residues 988-1006 (YFNILDLLVVSVSLISFGI) traverse the membrane as a helical segment. The Extracellular segment spans residues 1007-1013 (QSSAINV). Residues 1014–1032 (VKILRVLRVLRPLRAINRA) form a helical membrane-spanning segment. At 1033-1051 (KGLKHVVQCVFVAIRTIGN) the chain is on the cytoplasmic side. The chain crosses the membrane as a helical span at residues 1052 to 1071 (IVIVTTLLQFMFACIGVQLF). At 1072-1121 (KGKLYTCSDSSKQTEAECKGNYITYKDGEVDHPIIQPRSWENSKFDFDNV) the chain is on the extracellular side. An intrachain disulfide couples Cys-1078 to Cys-1089. The segment at 1109-1198 (RSWENSKFDF…FQEQGEQEYK (90 aa)) is dihydropyridine binding. Positions 1122–1142 (LAAMMALFTVSTFEGWPELLY) form an intramembrane region, pore-forming. A Selectivity filter of repeat III motif is present at residues 1133–1136 (TFEG). Residue Glu-1135 coordinates Ca(2+). Over 1143-1159 (RSIDSHTEDKGPIYNYR) the chain is Extracellular. Residues 1160–1181 (VEISIFFIIYIIIIAFFMMNIF) traverse the membrane as a helical segment. At 1182-1239 (VGFVIVTFQEQGEQEYKNCELDKNQRQCVEYALKARPLRRYIPKNQHQYKVWYVVNST) the chain is on the cytoplasmic side. The IV repeat unit spans residues 1226–1527 (NQHQYKVWYV…LFVAVIMDNF (302 aa)). A helical membrane pass occupies residues 1240–1261 (YFEYLMFVLILLNTICLAMQHY). Topologically, residues 1262-1269 (GQSCLFKI) are extracellular. Residues 1270 to 1291 (AMNILNMLFTGLFTVEMILKLI) form a helical membrane-spanning segment. Residues 1292 to 1301 (AFKPKGYFSD) are Cytoplasmic-facing. The chain crosses the membrane as a helical span at residues 1302-1321 (PWNVFDFLIVIGSIIDVILS). The Extracellular portion of the chain corresponds to 1322-1372 (ETNHYFCDAWNTFDALIVVGSIVDIAITEVNPAEHTQCSPSMNAEENSRIS). A helical transmembrane segment spans residues 1373 to 1391 (ITFFRLFRVMRLVKLLSRG). The Cytoplasmic portion of the chain corresponds to 1392–1409 (EGIRTLLWTFIKSFQALP). A helical transmembrane segment spans residues 1410-1430 (YVALLIVMLFFIYAVIGMQVF). Residues 1431-1452 (GKIALNDTTEINRNNNFQTFPQ) lie on the Extracellular side of the membrane. Asn-1436 carries N-linked (GlcNAc...) asparagine glycosylation. Positions 1453 to 1471 (AVLLLFRCATGEAWQDIML) form an intramembrane region, pore-forming. The short motif at 1462 to 1465 (TGEA) is the Selectivity filter of repeat IV element. Over 1472-1499 (ACMPGKKCAPESEPSNSTEGETPCGSSF) the chain is Extracellular. The segment at 1478-1546 (KCAPESEPSN…LGPHHLDEFK (69 aa)) is dihydropyridine binding. Cys-1479 and Cys-1495 are oxidised to a cystine. N-linked (GlcNAc...) asparagine glycosylation occurs at Asn-1487. The interval 1492–1534 (ETPCGSSFAVFYFISFYMLCAFLIINLFVAVIMDNFDYLTRDW) is phenylalkylamine binding. The chain crosses the membrane as a helical span at residues 1500-1524 (AVFYFISFYMLCAFLIINLFVAVIM). Topologically, residues 1525–2221 (DNFDYLTRDW…QDSRVYVSSL (697 aa)) are cytoplasmic. Residues 1659–1686 (DEVTVGKFYATFLIQEYFRKFKKRKEQG) form an important for interaction with STAC1, STAC2 and STAC3 region. Residues 1665–1685 (KFYATFLIQEYFRKFKKRKEQ) form a calmodulin-binding IQ region region. Residues 1699 to 1718 (LQAGLRTLHDIGPEIRRAIS) are important for localization in at the junctional membrane. A phosphoserine mark is found at Ser-1718 and Ser-1739. A disordered region spans residues 1778 to 1847 (INKAGSSQGD…TVEGHGPPLS (70 aa)). Over residues 1799–1811 (STFTPSSYSSTGS) the composition is skewed to polar residues. Residues 1812–1822 (NANINNANNTA) are compositionally biased toward low complexity. A Phosphoserine; by PKA modification is found at Ser-1981. 2 disordered regions span residues 2029-2063 (ASFP…VESS) and 2186-2221 (AGQD…VSSL).

The protein belongs to the calcium channel alpha-1 subunit (TC 1.A.1.11) family. CACNA1C subfamily. In terms of assembly, component of a calcium channel complex consisting of a pore-forming alpha subunit (CACNA1C) and ancillary beta, gamma and delta subunits. The channel complex contains alpha, beta, gamma and delta subunits in a 1:1:1:1 ratio, i.e. it contains only one of each type of subunit. CACNA1C channel activity is modulated by ancillary subunits, such as CACNB1, CACNB2, CACNB3, CACNA2D1 and CACNA2D4. Interacts with the gamma subunits CACNG4, CACNG6, CACNG7 and CACNG8. Interacts with CACNB1. Interacts with CACNB2. Identified in a complex with CACNA2D4 and CACNB3. Interacts with CACNB3. Interacts with CACNA2D1. Interacts with CACNA2D4. Interacts with CALM1. Interacts (via the N-terminus and the C-terminal C and IQ motifs) with CABP1; this inhibits Ca(2+)-dependent channel inactivation. The binding via the C motif is calcium independent whereas the binding via IQ requires the presence of calcium and is mutually exclusive with calmodulin binding. The binding to the cytoplasmic N-terminal domain is calcium independent but is essential for the channel modulation. Interacts (via C-terminal CDB motif) with CABP5; in a calcium-dependent manner. Interacts with CIB1; the interaction increases upon cardiomyocytes hypertrophy. Interacts with STAC2 and STAC3; this inhibits channel inactivation. (Microbial infection) Interacts with influenzavirus H1 hemagglutinin. Post-translationally, phosphorylation by PKA at Ser-1981 activates the channel. Elevated levels of blood glucose lead to increased phosphorylation by PKA. As to expression, detected throughout the brain, including hippocampus, cerebellum and amygdala, throughout the heart and vascular system, including ductus arteriosus, in urinary bladder, and in retina and sclera in the eye. Expressed in brain, heart, jejunum, ovary, pancreatic beta-cells and vascular smooth muscle. Overall expression is reduced in atherosclerotic vascular smooth muscle.

It is found in the cell membrane. The protein resides in the sarcolemma. Its subcellular location is the perikaryon. The protein localises to the postsynaptic density membrane. It localises to the cell projection. It is found in the dendrite. The protein resides in the T-tubule. It carries out the reaction Ca(2+)(in) = Ca(2+)(out). Its activity is regulated as follows. Inhibited by dihydropyridines (DHP), such as isradipine. Inhibited by nifedipine. Channel activity is regulated by Ca(2+) and calmodulin. Binding of STAC1, STAC2 or STAC3 to a region that overlaps with the calmodulin binding site inhibits channel inactivation by Ca(2+) and calmodulin. Binding of calmodulin or CABP1 at the same regulatory sites results in opposite effects on the channel function. Shear stress and pressure increases calcium channel activity. Functionally, pore-forming, alpha-1C subunit of the voltage-gated calcium channel that gives rise to L-type calcium currents. Mediates influx of calcium ions into the cytoplasm, and thereby triggers calcium release from the sarcoplasm. Plays an important role in excitation-contraction coupling in the heart. Required for normal heart development and normal regulation of heart rhythm. Required for normal contraction of smooth muscle cells in blood vessels and in the intestine. Essential for normal blood pressure regulation via its role in the contraction of arterial smooth muscle cells. Long-lasting (L-type) calcium channels belong to the 'high-voltage activated' (HVA) group. Pore-forming, alpha-1C subunit of the voltage-gated calcium channel that gives rise to L-type calcium currents. In terms of biological role, (Microbial infection) Acts as a receptor for Influenzavirus. May play a critical role in allowing virus entry when sialylated and expressed on lung tissues. The protein is Voltage-dependent L-type calcium channel subunit alpha-1C (CACNA1C) of Homo sapiens (Human).